The sequence spans 427 residues: Glutamate-1-semialdehyde 2,1-aminomutase (427 aa).

An N6-(pyridoxal phosphate)lysine modification is found at Lys-265.

The protein belongs to the class-III pyridoxal-phosphate-dependent aminotransferase family. HemL subfamily. Homodimer. Requires pyridoxal 5'-phosphate as cofactor.

Its subcellular location is the cytoplasm. It carries out the reaction (S)-4-amino-5-oxopentanoate = 5-aminolevulinate. It participates in porphyrin-containing compound metabolism; protoporphyrin-IX biosynthesis; 5-aminolevulinate from L-glutamyl-tRNA(Glu): step 2/2. This chain is Glutamate-1-semialdehyde 2,1-aminomutase, found in Pseudomonas savastanoi pv. phaseolicola (strain 1448A / Race 6) (Pseudomonas syringae pv. phaseolicola (strain 1448A / Race 6)).